A 285-amino-acid chain; its full sequence is ATP synthase gamma chain (285 aa).

The protein belongs to the ATPase gamma chain family. As to quaternary structure, F-type ATPases have 2 components, CF(1) - the catalytic core - and CF(0) - the membrane proton channel. CF(1) has five subunits: alpha(3), beta(3), gamma(1), delta(1), epsilon(1). CF(0) has three main subunits: a, b and c.

It is found in the cell membrane. Produces ATP from ADP in the presence of a proton gradient across the membrane. The gamma chain is believed to be important in regulating ATPase activity and the flow of protons through the CF(0) complex. This is ATP synthase gamma chain from Exiguobacterium sp. (strain ATCC BAA-1283 / AT1b).